We begin with the raw amino-acid sequence, 470 residues long: Diaminobutyrate--2-oxoglutarate aminotransferase (470 aa).

Lys-304 is modified (N6-(pyridoxal phosphate)lysine).

It belongs to the class-III pyridoxal-phosphate-dependent aminotransferase family. Requires pyridoxal 5'-phosphate as cofactor.

The catalysed reaction is L-2,4-diaminobutanoate + 2-oxoglutarate = L-aspartate 4-semialdehyde + L-glutamate. It functions in the pathway siderophore biosynthesis; rhizobactin biosynthesis. This chain is Diaminobutyrate--2-oxoglutarate aminotransferase (rhbA), found in Rhizobium meliloti (strain 1021) (Ensifer meliloti).